Reading from the N-terminus, the 495-residue chain is Oxidoreductase AflY (495 aa).

The tract at residues 1–22 (MGSHAPAVAGKPDPKKGPYQAT) is disordered.

This sequence belongs to the questin oxidase family.

The protein operates within mycotoxin biosynthesis; aflatoxin biosynthesis. Oxidoreductase; part of the gene cluster that mediates the biosynthesis of aflatoxins, a group of polyketide-derived furanocoumarins, and part of the most toxic and carcinogenic compounds among the known mycotoxins. The four major aflatoxins produced by A.parasiticus are aflatoxin B1 (AFB1), aflatoxin B2 (AFB2), aflatoxin G1 (AFG1) and aflatoxin G2 (AFG2). Within the aflatoxin pathway, the oxidoreductase aflY seems to be involved in the conversion of versicolorin A (VERA) to demethylsterigmatocystin (DMST), through probable Baeyer-Villiger oxidation required for the formation of the xanthone ring. The biosynthesis of aflatoxins begins with the norsolorinic acid synthase aflC that combines a hexanoyl starter unit produced by the fatty acid synthase aflA/aflB and 7 malonyl-CoA extender units to synthesize the precursor NOR. The second step is the conversion of NOR to averantin and requires the norsolorinic acid ketoreductase aflD, which catalyzes the dehydration of norsolorinic acid to form (1'S)-averantin. The norsolorinic acid reductases aflE and aflF may also play a role in the conversion of NOR to AVN. The cytochrome P450 monooxygenase aflG then catalyzes the hydroxylation of AVN to 5'hydroxyaverantin (HAVN). The next step is performed by the 5'-hydroxyaverantin dehydrogenase aflH that transforms HAVN to 5'-oxoaverantin (OAVN) which is further converted to averufin (AVF) by aflK that plays a dual role in the pathway, as a 5'-oxoaverantin cyclase that mediates conversion of 5'-oxoaverantin, as well as a versicolorin B synthase in a later step in the pathway. The averufin oxidase aflI catalyzes the conversion of AVF to versiconal hemiacetal acetate (VHA). VHA is then the substrate for the versiconal hemiacetal acetate esterase aflJ to yield versiconal (VAL). Versicolorin B synthase aflK then converts VAL to versicolorin B (VERB) by closing the bisfuran ring of aflatoxin which is required for DNA-binding, thus giving to aflatoxin its activity as a mutagen. Then, the activity of the versicolorin B desaturase aflL leads to versicolorin A (VERA). A branch point starts from VERB since it can also be converted to dihydrodemethylsterigmatocystin (DMDHST), probably also by aflL, VERA being a precursor for aflatoxins B1 and G1, and DMDHST for aflatoxins B2 and G2. Next, the versicolorin reductase aflM and the cytochrome P450 monooxygenase aflN are involved in conversion of VERA to demethylsterigmatocystin (DMST). AflX and aflY seem also involved in this step, through probable aflX-mediated epoxide ring-opening step following versicolorin A oxidation and aflY-mediated Baeyer-Villiger oxidation required for the formation of the xanthone ring. The methyltransferase aflO then leads to the modification of DMST to sterigmatocystin (ST), and of DMDHST to dihydrosterigmatocystin (DHST). Both ST and DHST are then substrates of the O-methyltransferase aflP to yield O-methylsterigmatocystin (OMST) and dihydro-O-methylsterigmatocystin (DHOMST), respectively. Finally OMST is converted to aflatoxins B1 and G1, and DHOMST to aflatoxins B2 and G2, via the action of several enzymes including O-methylsterigmatocystin oxidoreductase aflQ, the cytochrome P450 monooxygenase aflU, but also the NADH-dependent flavin oxidoreductase nadA which is specifically required for the synthesis of AFG1. The protein is Oxidoreductase AflY of Aspergillus parasiticus (strain ATCC 56775 / NRRL 5862 / SRRC 143 / SU-1).